Consider the following 362-residue polypeptide: mRNA decay activator protein ZFP36L2 (362 aa).

Residues 100–109 (SFSENGERSQ) are compositionally biased toward basic and acidic residues. The interval 100 to 126 (SFSENGERSQHLLHLQQQQQQKAGAQV) is disordered. Residues 111-120 (LLHLQQQQQQ) show a composition bias toward low complexity. The RNA-binding motif lies at 130–135 (RYKTEL). C3H1-type zinc fingers lie at residues 130-158 (RYKT…HGFH) and 168-196 (KYKT…HNAE). Positions 147 to 188 (YGEKCQFAHGFHELRSLTRHPKYKTELCRTFHTIGFCPYGPR) are RNA-binding. Disordered regions lie at residues 225-244 (DSPL…SSSS) and 306-362 (SESP…ISDD). Over residues 327-346 (YLSGSLSSGSLSGSDSPTLD) the composition is skewed to low complexity.

Post-translationally, phosphorylated.

It is found in the nucleus. It localises to the cytoplasm. In terms of biological role, zinc-finger RNA-binding protein that destabilizes several cytoplasmic AU-rich element (ARE)-containing mRNA transcripts by promoting their poly(A) tail removal or deadenylation, and hence provide a mechanism for attenuating protein synthesis. Acts as a 3'-untranslated region (UTR) ARE mRNA-binding adapter protein to communicate signaling events to the mRNA decay machinery. Functions by recruiting the CCR4-NOT deadenylase complex and probably other components of the cytoplasmic RNA decay machinery to the bound ARE-containing mRNAs, and hence promotes ARE-mediated mRNA deadenylation and decay processes. Binds to 3'-UTR ARE of numerous mRNAs. Also induces the degradation of ARE-containing mRNAs even in absence of poly(A) tail. Required for tubulogenesis during pronephros development. The chain is mRNA decay activator protein ZFP36L2 (zfp36l2) from Xenopus tropicalis (Western clawed frog).